The chain runs to 424 residues: UPF0229 protein Sde_0732 (424 aa).

Positions 52–109 are disordered; the sequence is IGIPSKDISEPVFHHDSGGVDTRVLPGNDQFHSGDRIQRPPSGQGGGGSGKGASDSGE. Residues 58 to 69 show a composition bias toward basic and acidic residues; sequence DISEPVFHHDSG.

This sequence belongs to the UPF0229 family.

The sequence is that of UPF0229 protein Sde_0732 from Saccharophagus degradans (strain 2-40 / ATCC 43961 / DSM 17024).